A 455-amino-acid chain; its full sequence is Kynureninase (455 aa).

Pyridoxal 5'-phosphate-binding positions include Leu94, Thr95, 122-125 (FPSD), Asp208, His211, and Tyr233. An N6-(pyridoxal phosphate)lysine modification is found at Lys234. Pyridoxal 5'-phosphate contacts are provided by Trp275 and Asn303.

It belongs to the kynureninase family. In terms of assembly, homodimer. Requires pyridoxal 5'-phosphate as cofactor.

Its subcellular location is the cytoplasm. The enzyme catalyses L-kynurenine + H2O = anthranilate + L-alanine + H(+). It carries out the reaction 3-hydroxy-L-kynurenine + H2O = 3-hydroxyanthranilate + L-alanine + H(+). It functions in the pathway amino-acid degradation; L-kynurenine degradation; L-alanine and anthranilate from L-kynurenine: step 1/1. It participates in cofactor biosynthesis; NAD(+) biosynthesis; quinolinate from L-kynurenine: step 2/3. Functionally, catalyzes the cleavage of L-kynurenine (L-Kyn) and L-3-hydroxykynurenine (L-3OHKyn) into anthranilic acid (AA) and 3-hydroxyanthranilic acid (3-OHAA), respectively. In Vanderwaltozyma polyspora (strain ATCC 22028 / DSM 70294 / BCRC 21397 / CBS 2163 / NBRC 10782 / NRRL Y-8283 / UCD 57-17) (Kluyveromyces polysporus), this protein is Kynureninase.